A 684-amino-acid chain; its full sequence is MAGVNRSFSYSRGDDALLRDDEREISPLRSAEDGLYSTSYGDVSPLSAGVQAQNRPFDRGLVSVPEGQTLERHMTSTPGMDNLGPASVGGGISGIALGVANSHNRQSGVDAFRETDVPVRNLPAERDFNTTGSDNPYIPAPPDGDIYPSSEAVRYRDSYSSHTGLGAGAPFAEHSTPGTTPSQRSFFDSPYQGVDAGPYQRHSAYSSHDYPLVINPDDIADDGDDGFPVHPKGAADYRSNANVPGTGVAGAAAAGGFLGKFRALFKREEPSPFYDSDIGGGLGGAEKAQGGRHIIGGGSRKRGWIVGLILAAVIVAAIVGGAVGGILGHQEHDGDTSSSSSSSSSSGTGSGGSDKGDGLLDKDSDEIKALMNNKNLHKVFPGVDYTPWGVQYPLCLQYPPSQNNVTRDLAVLTQLTNTIRLYGTDCNQTEMVLEAIDRLQLTNMKLWLGVWIDTNTTTTDRQISQLYKIVENANDTSIFKGAIVGNEALYRAGSDVASAETNLIGYINDVKDHFKDKNIDLPVGTSDLGDNWNAQLVSAADFVMSNIHPFFGGVEIDDAASWTWTFWQTHDTPLTAGTNKQQIISEVGWPTGGGNDCGSDNKCQNDKQGAVAGIDELNQFLSEWVCQALDNGTEYFWFEAFDEPWKVQYNTPGQEWEDKWGLMDSARNLKPGVKIPDCGGKTIT.

Over residues 1-10 (MAGVNRSFSY) the composition is skewed to polar residues. Disordered stretches follow at residues 1-38 (MAGV…LYST), 124-143 (AERD…APPD), and 157-182 (DSYS…TTPS). Over 1-302 (MAGVNRSFSY…HIIGGGSRKR (302 aa)) the chain is Cytoplasmic. Positions 12–32 (RGDDALLRDDEREISPLRSAE) are enriched in basic and acidic residues. The chain crosses the membrane as a helical; Signal-anchor for type II membrane protein span at residues 303–323 (GWIVGLILAAVIVAAIVGGAV). Over 324–684 (GGILGHQEHD…IPDCGGKTIT (361 aa)) the chain is Extracellular. Residues 330-358 (QEHDGDTSSSSSSSSSSGTGSGGSDKGDG) form a disordered region. Residues 336-347 (TSSSSSSSSSSG) show a composition bias toward low complexity. 4 N-linked (GlcNAc...) asparagine glycosylation sites follow: N404, N427, N455, and N474. Catalysis depends on E487, which acts as the Proton donor. Catalysis depends on E586, which acts as the Nucleophile. A glycan (N-linked (GlcNAc...) asparagine) is linked at N631.

It belongs to the glycosyl hydrolase 17 family.

Its subcellular location is the cell membrane. It carries out the reaction Hydrolysis of (1-&gt;3)-beta-D-glucosidic linkages in (1-&gt;3)-beta-D-glucans.. Its function is as follows. Glucanases play a role in cell expansion during growth, in cell-cell fusion during mating, and in spore release during sporulation. This enzyme may be involved in beta-glucan degradation. Active on laminarin and lichenan. The chain is Putative glucan endo-1,3-beta-glucosidase btgC (btgC) from Aspergillus niger (strain ATCC MYA-4892 / CBS 513.88 / FGSC A1513).